The sequence spans 325 residues: Acetyl-coenzyme A carboxylase carboxyl transferase subunit alpha (325 aa).

Positions 35–292 (EIEKLEARLA…DKVLKRSLKQ (258 aa)) constitute a CoA carboxyltransferase C-terminal domain.

Belongs to the AccA family. In terms of assembly, acetyl-CoA carboxylase is a heterohexamer composed of biotin carboxyl carrier protein (AccB), biotin carboxylase (AccC) and two subunits each of ACCase subunit alpha (AccA) and ACCase subunit beta (AccD).

It is found in the cytoplasm. It catalyses the reaction N(6)-carboxybiotinyl-L-lysyl-[protein] + acetyl-CoA = N(6)-biotinyl-L-lysyl-[protein] + malonyl-CoA. The protein operates within lipid metabolism; malonyl-CoA biosynthesis; malonyl-CoA from acetyl-CoA: step 1/1. In terms of biological role, component of the acetyl coenzyme A carboxylase (ACC) complex. First, biotin carboxylase catalyzes the carboxylation of biotin on its carrier protein (BCCP) and then the CO(2) group is transferred by the carboxyltransferase to acetyl-CoA to form malonyl-CoA. The chain is Acetyl-coenzyme A carboxylase carboxyl transferase subunit alpha from Geobacillus sp. (strain WCH70).